The sequence spans 226 residues: N-acetyltransferase family 8 member 2 (226 aa).

Helical transmembrane passes span 33–55 (FYHV…TIIL) and 60–82 (WLLA…WVSC). Positions 69–221 (LFLLCLRLIF…FHFTYSLPSV (153 aa)) constitute an N-acetyltransferase domain. An N6-acetyllysine modification is found at K204.

Belongs to the camello family.

The protein resides in the membrane. In terms of biological role, probable acetyltransferase. Has no detectable histone acetyltransferase activity towards histone H3 or H4. The polypeptide is N-acetyltransferase family 8 member 2 (Rattus norvegicus (Rat)).